The primary structure comprises 391 residues: Zinc finger protein 414 (391 aa).

The tract at residues 1–110 is disordered; it reads MDEEPSGPSL…RRPPPGKQIP (110 aa). Residues 84–93 show a composition bias toward polar residues; sequence GPTSTVSGTS. 3 consecutive C2H2-type zinc fingers follow at residues 109–133, 145–169, and 176–201; these read IPCSSPGCCLSFPSVRDLAQHLRTH, FRCSALSCTETFPNMQELVAHGKLH, and FKCENCLLRIRTHRSLFKHLHVCAEH. Disordered regions lie at residues 201–243, 274–312, and 344–391; these read HAQS…LEPF, LAAAPGPPASSAAVWKKSQGAGGSPRRPQGGSDAPSGHA, and HLED…FSPL. Residues 214 to 226 show a composition bias toward basic and acidic residues; sequence LDRESPASERPPE. Pro residues predominate over residues 227–236; the sequence is SDPAPAPGLP. The segment covering 274 to 286 has biased composition (low complexity); it reads LAAAPGPPASSAA. A C2H2-type 4 zinc finger spans residues 326-348; sequence YSCMQCAFSTASRPAMTLHLEDH. Positions 353–372 are enriched in pro residues; it reads PAAPAPGQPRPDAPADPAPL.

It belongs to the krueppel C2H2-type zinc-finger protein family.

It is found in the nucleus. May be involved in transcriptional regulation. This Bos taurus (Bovine) protein is Zinc finger protein 414 (ZNF414).